The following is a 519-amino-acid chain: Iroquois-class homeodomain protein IRX-4 (519 aa).

The segment at residues 143–204 (GTRRKNATRE…NARRRLKKEN (62 aa)) is a DNA-binding region (homeobox; TALE-type). A disordered region spans residues 204–298 (NKMTWPPRNK…VPAAPDGPVK (95 aa)). Residues 213 to 222 (KCADEKRPYA) show a composition bias toward basic and acidic residues. Acidic residues-rich tracts occupy residues 223–235 (EGEE…EEAR) and 257–267 (LSDLDDFDPLE).

The protein belongs to the TALE/IRO homeobox family. Interacts with the vitamin D receptor VDR but doesn't affect its transactivation activity. In terms of tissue distribution, predominantly expressed in cardiac ventricles.

It localises to the nucleus. Functionally, likely to be an important mediator of ventricular differentiation during cardiac development. This chain is Iroquois-class homeodomain protein IRX-4 (IRX4), found in Homo sapiens (Human).